Here is a 560-residue protein sequence, read N- to C-terminus: IQ motif and ankyrin repeat domain-containing protein 1 (560 aa).

Residues 1–72 (MDSKKGRPKA…DRAARAIQGA (72 aa)) are disordered. Positions 62–91 (EDRAARAIQGAFRQLRARRELARRREERRE) constitute an IQ domain. 2 ANK repeats span residues 191–223 (YGNTPLSEAAAGGQPLAIQLRAELGASPNSKGA) and 224–253 (FGPTPLYRAAFGGHLAAVEVLLKLGADPRV). The stretch at 281–398 (LTEAMLQNME…RLELREQTQE (118 aa)) forms a coiled coil.

The protein is IQ motif and ankyrin repeat domain-containing protein 1 of Homo sapiens (Human).